Consider the following 463-residue polypeptide: Probable cysteine protease RD21B (463 aa).

Residues 1–21 (MGFLKLSPMILLLAMIGVSYA) form the signal peptide. Residues 22 to 137 (MDMSIISYDE…DRYQARVGDA (116 aa)) constitute a propeptide, activation peptide. The N-linked (GlcNAc...) asparagine glycan is linked to Asn-92. 5 disulfide bridges follow: Cys-159–Cys-201, Cys-193–Cys-234, Cys-292–Cys-343, Cys-376–Cys-388, and Cys-382–Cys-403. The active site involves Cys-162. Active-site residues include His-298 and Asn-318. The propeptide at 354 to 463 (KKGQNPPNPG…FWAKSRKHIA (110 aa)) is removed in mature form. Asn-415 carries an N-linked (GlcNAc...) asparagine glycan.

This sequence belongs to the peptidase C1 family. As to quaternary structure, interacts with PRN2. Interacts with WSCP.

Functionally, probable thiol protease. The protein is Probable cysteine protease RD21B of Arabidopsis thaliana (Mouse-ear cress).